Here is a 291-residue protein sequence, read N- to C-terminus: Endo-1,4-beta-xylanase 11B (291 aa).

Residues 1 to 19 (MVAFSSLFLGASIAATALA) form the signal peptide. The region spanning 34-222 (TYTQSATGTH…SSGSARINVG (189 aa)) is the GH11 domain. N-linked (GlcNAc...) asparagine glycosylation is present at Asn93. Glu118 acts as the Nucleophile in catalysis. Glu209 functions as the Proton donor in the catalytic mechanism. Positions 223 to 246 (GGSTGGGNNGGGNNGGNPGGNPGG) are disordered. One can recognise a CBM1 domain in the interval 255–291 (NCSPRWGQCGGQGWNGPTCCESGTTCRQQNQWYSQCL).

Belongs to the glycosyl hydrolase 11 (cellulase G) family.

It is found in the secreted. It carries out the reaction Endohydrolysis of (1-&gt;4)-beta-D-xylosidic linkages in xylans.. It participates in glycan degradation; xylan degradation. The activity iss completely inhibited by Hg(2+), a metal ion that interacts with Trp and oxidizes the indole ring, and is significantly enhanced by beta-mercaptoethanol, which counteracts the oxidation effects of the S-S linkage between Cys residues. Its function is as follows. Endo-1,4-beta-xylanase involved in the hydrolysis of xylan, a major structural heterogeneous polysaccharide found in plant biomass representing the second most abundant polysaccharide in the biosphere, after cellulose. Shows maximum activity on soluble wheat arabinoxylan (defined as 100%), moderate activity on birchwood xylan (80.5%) and beechwood xylan (76.2%), and weak activity on insoluble wheat arabinoxylan (7.0%). Has no activity towards glucan or carboxymethyl cellulose-sodium (CMC-Na). The sequence is that of Endo-1,4-beta-xylanase 11B from Humicola insolens (Soft-rot fungus).